The following is a 237-amino-acid chain: DNA repair protein RecO (237 aa).

It belongs to the RecO family.

Its function is as follows. Involved in DNA repair and RecF pathway recombination. This chain is DNA repair protein RecO, found in Cereibacter sphaeroides (strain ATCC 17025 / ATH 2.4.3) (Rhodobacter sphaeroides).